The primary structure comprises 178 residues: Acireductone dioxygenase (178 aa).

4 residues coordinate Fe(2+): H82, H84, E88, and H127. 4 residues coordinate Ni(2+): H82, H84, E88, and H127. S157 is modified (phosphoserine).

Belongs to the acireductone dioxygenase (ARD) family. Requires Fe(2+) as cofactor. It depends on Ni(2+) as a cofactor.

It localises to the cytoplasm. Its subcellular location is the nucleus. It carries out the reaction 1,2-dihydroxy-5-(methylsulfanyl)pent-1-en-3-one + O2 = 4-methylsulfanyl-2-oxobutanoate + formate + 2 H(+). The catalysed reaction is 1,2-dihydroxy-5-(methylsulfanyl)pent-1-en-3-one + O2 = 3-(methylsulfanyl)propanoate + CO + formate + 2 H(+). It functions in the pathway amino-acid biosynthesis; L-methionine biosynthesis via salvage pathway; L-methionine from S-methyl-5-thio-alpha-D-ribose 1-phosphate: step 5/6. Its function is as follows. Catalyzes 2 different reactions between oxygen and the acireductone 1,2-dihydroxy-3-keto-5-methylthiopentene (DHK-MTPene) depending upon the metal bound in the active site. Fe-containing acireductone dioxygenase (Fe-ARD) produces formate and 2-keto-4-methylthiobutyrate (KMTB), the alpha-ketoacid precursor of methionine in the methionine recycle pathway. Ni-containing acireductone dioxygenase (Ni-ARD) produces methylthiopropionate, carbon monoxide and formate, and does not lie on the methionine recycle pathway. This chain is Acireductone dioxygenase (adi1), found in Schizosaccharomyces pombe (strain 972 / ATCC 24843) (Fission yeast).